Here is a 4481-residue protein sequence, read N- to C-terminus: Dynein axonemal heavy chain 17 (4481 aa).

Residues 1–1792 are stem; sequence MPDLRIDYLE…FANICDAQIK (1792 aa). The stretch at 521–569 is one Kelch 1 repeat; sequence LLYMCGGLLERPLILVEVVPRYSVMLEMFNTELDNAKLMYDAQMAASAD. The stretch at 759–826 forms a coiled coil; that stretch reads ENVMEYIQEM…GRVANLNKRY (68 aa). 2 TPR repeats span residues 1533 to 1566 and 1688 to 1722; these read VVEATNKPDLYNKLENLKMSLAVCEKALAEYLET and IWWTTEVGLAFARLEEGYENAIKDYNKKQISQLNA. 4 AAA regions span residues 1793–2014, 2074–2295, 2401–2649, and 2747–2996; these read YSYE…VLVV, KIIK…IGFK, ELDP…IFQG, and SYNE…ERRY. Residues 1831–1838 and 2112–2119 each bind ATP; these read GPAGTGKT and GNAGSGKS. A Kelch 2 repeat occupies 2229-2275; that stretch reads ISHLRTATPATVSRAGILYINPADLGWNPVVSSWIERRKVQSEKANL. ATP-binding positions include 2439–2446 and 2785–2792; these read GNAGTGKS and GVGGSGKQ. A Kelch 3 repeat occupies 2782–2834; the sequence is LLVGVGGSGKQSLSRLAAYISALDVFQITLKKGYAIPDLKMDLATQYIKSAVK. Coiled-coil stretches lie at residues 3011–3071 and 3241–3293; these read YQNL…IQVV and DVAP…EKIK. Residues 3011 to 3297 form a stalk region; the sequence is YQNLLAKKRM…TAEKIKCQQE (287 aa). 2 AAA regions span residues 3389–3616 and 3826–4059; these read LTDD…EIEE and VKNF…VLYN. The stretch at 4138–4173 is one TPR 3 repeat; the sequence is PESPYLYGLHPNAEIGFLTVTSEKLFRTVLEMQPKE. 2 Kelch repeats span residues 4272 to 4321 and 4339 to 4385; these read NLGL…DLLQ and VWLA…DMTA.

It belongs to the dynein heavy chain family. In terms of assembly, consists of at least two heavy chains and a number of intermediate and light chains.

It localises to the cytoplasm. Its subcellular location is the cytoskeleton. It is found in the flagellum axoneme. Force generating protein component of the outer dynein arms (ODAs) in the sperm flagellum. Produces force towards the minus ends of microtubules. Dynein has ATPase activity; the force-producing power stroke is thought to occur on release of ADP. Plays a major role in sperm motility, implicated in sperm flagellar assembly and beating. This Mus musculus (Mouse) protein is Dynein axonemal heavy chain 17.